A 261-amino-acid chain; its full sequence is Endomucin (261 aa).

The first 18 residues, 1-18, serve as a signal peptide directing secretion; it reads MELLQVTILFLLPSICSS. N-linked (GlcNAc...) asparagine glycosylation is found at Asn-19, Asn-28, Asn-98, and Asn-104. The Extracellular portion of the chain corresponds to 19 to 190; it reads NSTGVLEAAN…TSATSRSYSS (172 aa). 2 stretches are compositionally biased toward polar residues: residues 118–134 and 146–171; these read TLQSSKPKTETQSSIKT and ASPSKTGTLTSIPVTIPENTSQSQVI. Residues 118–183 are disordered; that stretch reads TLQSSKPKTE…EGGKNASTSA (66 aa). Asn-164 and Asn-178 each carry an N-linked (GlcNAc...) asparagine glycan. A helical membrane pass occupies residues 191–211; it reads IILPVVIALIVITLSVFVLVG. Residues 212-261 are Cytoplasmic-facing; that stretch reads LYRMCWKADPGTPENGNDQPQSDKESVKLLTVKTISHESGEHSAQGKTKN. Phosphoserine is present on Ser-237.

In terms of processing, highly O-glycosylated. Sialic acid-rich glycoprotein. As to expression, expressed in heart, kidney and lung.

Its subcellular location is the cell membrane. The protein localises to the membrane. It is found in the secreted. In terms of biological role, endothelial sialomucin, also called endomucin or mucin-like sialoglycoprotein, which interferes with the assembly of focal adhesion complexes and inhibits interaction between cells and the extracellular matrix. The sequence is that of Endomucin (EMCN) from Homo sapiens (Human).